Consider the following 186-residue polypeptide: MSIVEIKQQATQKMQQSLESFQHNLTKIRTGRANPGLLDTVHVDYYGSMVPISQVANVALLDARTISVSPWEKGMGAKIEKAIRDSDLGLNPASQGDLIRVPMPAMTEERRKELTKVVRAEGEHAKVAIRNLRRDANDGVKKLVKDKLASEDDERRSQEEIQKFTDRFIADVDKLVTGKEQDIMAV.

Belongs to the RRF family.

It localises to the cytoplasm. Functionally, responsible for the release of ribosomes from messenger RNA at the termination of protein biosynthesis. May increase the efficiency of translation by recycling ribosomes from one round of translation to another. In Polaromonas naphthalenivorans (strain CJ2), this protein is Ribosome-recycling factor.